The sequence spans 248 residues: PF03932 family protein CutC (248 aa).

It belongs to the CutC family. In terms of assembly, homodimer.

It localises to the cytoplasm. This chain is PF03932 family protein CutC, found in Shigella boydii serotype 18 (strain CDC 3083-94 / BS512).